We begin with the raw amino-acid sequence, 303 residues long: 2-dehydropantoate 2-reductase (303 aa).

Residues 7-12 (GCGALG), Asn-98, and Ala-122 contribute to the NADP(+) site. Asn-98 serves as a coordination point for substrate. Residue Lys-176 is the Proton donor of the active site. Substrate is bound by residues Asn-180, Asn-184, Asn-194, and Ser-244. Glu-256 is an NADP(+) binding site.

Belongs to the ketopantoate reductase family. Monomer.

It is found in the cytoplasm. The enzyme catalyses (R)-pantoate + NADP(+) = 2-dehydropantoate + NADPH + H(+). It participates in cofactor biosynthesis; (R)-pantothenate biosynthesis; (R)-pantoate from 3-methyl-2-oxobutanoate: step 2/2. Its function is as follows. Catalyzes the NADPH-dependent reduction of ketopantoate into pantoic acid. The protein is 2-dehydropantoate 2-reductase (panE) of Escherichia coli O157:H7.